Here is a 600-residue protein sequence, read N- to C-terminus: NADH-quinone oxidoreductase subunit C/D (600 aa).

The NADH dehydrogenase I subunit C stretch occupies residues 1–190; that stretch reads MVNNMTDLTA…SPFELTKAKQ (190 aa). An NADH dehydrogenase I subunit D region spans residues 214–600; sequence DFMFLNLGPN…IDFVMSDVDR (387 aa).

This sequence in the N-terminal section; belongs to the complex I 30 kDa subunit family. The protein in the C-terminal section; belongs to the complex I 49 kDa subunit family. NDH-1 is composed of 13 different subunits. Subunits NuoB, CD, E, F, and G constitute the peripheral sector of the complex.

The protein localises to the cell inner membrane. The catalysed reaction is a quinone + NADH + 5 H(+)(in) = a quinol + NAD(+) + 4 H(+)(out). NDH-1 shuttles electrons from NADH, via FMN and iron-sulfur (Fe-S) centers, to quinones in the respiratory chain. The immediate electron acceptor for the enzyme in this species is believed to be ubiquinone. Couples the redox reaction to proton translocation (for every two electrons transferred, four hydrogen ions are translocated across the cytoplasmic membrane), and thus conserves the redox energy in a proton gradient. In Shigella boydii serotype 18 (strain CDC 3083-94 / BS512), this protein is NADH-quinone oxidoreductase subunit C/D.